We begin with the raw amino-acid sequence, 333 residues long: Anthranilate phosphoribosyltransferase (333 aa).

Residues Gly-81, 84 to 85 (GD), Thr-89, 91 to 94 (NIST), 109 to 117 (KHGNRSVSS), and Ser-121 each bind 5-phospho-alpha-D-ribose 1-diphosphate. Gly-81 contacts anthranilate. Ser-93 provides a ligand contact to Mg(2+). Asn-112 lines the anthranilate pocket. Arg-167 lines the anthranilate pocket. Mg(2+) is bound by residues Asp-225 and Glu-226.

This sequence belongs to the anthranilate phosphoribosyltransferase family. Homodimer. The cofactor is Mg(2+).

The enzyme catalyses N-(5-phospho-beta-D-ribosyl)anthranilate + diphosphate = 5-phospho-alpha-D-ribose 1-diphosphate + anthranilate. It participates in amino-acid biosynthesis; L-tryptophan biosynthesis; L-tryptophan from chorismate: step 2/5. Catalyzes the transfer of the phosphoribosyl group of 5-phosphorylribose-1-pyrophosphate (PRPP) to anthranilate to yield N-(5'-phosphoribosyl)-anthranilate (PRA). In Glaesserella parasuis serovar 5 (strain SH0165) (Haemophilus parasuis), this protein is Anthranilate phosphoribosyltransferase.